A 1188-amino-acid chain; its full sequence is Major DNA-binding protein (1188 aa).

Residues 838–839 carry the Required for filament formation motif; sequence FW. A disordered region spans residues 1145-1175; that stretch reads CDDDDADKDAPHGAKSDVPNGDDEDVFAGPS. A required for nuclear localization region spans residues 1166-1188; the sequence is DDEDVFAGPSAKKRTLATEILFC.

This sequence belongs to the herpesviridae major DNA-binding protein family. In terms of assembly, homooligomers. Forms double-helical filaments necessary for the formation of replication compartments within the host nucleus. Interacts with the origin-binding protein. Interacts with the helicase primase complex; this interaction stimulates primer synthesis activity of the helicase-primase complex. Interacts with the DNA polymerase. Interacts with the alkaline exonuclease; this interaction increases its nuclease processivity.

The protein localises to the host nucleus. Plays several crucial roles in viral infection. Participates in the opening of the viral DNA origin to initiate replication by interacting with the origin-binding protein. May disrupt loops, hairpins and other secondary structures present on ssDNA to reduce and eliminate pausing of viral DNA polymerase at specific sites during elongation. Promotes viral DNA recombination by performing strand-transfer, characterized by the ability to transfer a DNA strand from a linear duplex to a complementary single-stranded DNA circle. Can also catalyze the renaturation of complementary single strands. Additionally, reorganizes the host cell nucleus, leading to the formation of prereplicative sites and replication compartments. This process is driven by the protein which can form double-helical filaments in the absence of DNA. The polypeptide is Major DNA-binding protein (Amazona oratrix (yellow-headed parrot)).